The sequence spans 659 residues: Exoribonuclease 2 (659 aa).

The region spanning 189–531 (RENLTALHFV…NHRLIKAVLA (343 aa)) is the RNB domain. The region spanning 576 to 658 (NVEFNAEVQD…ATRSIVGEIL (83 aa)) is the S1 motif domain.

It belongs to the RNR ribonuclease family. RNase II subfamily.

It localises to the cytoplasm. The enzyme catalyses Exonucleolytic cleavage in the 3'- to 5'-direction to yield nucleoside 5'-phosphates.. In terms of biological role, involved in mRNA degradation. Hydrolyzes single-stranded polyribonucleotides processively in the 3' to 5' direction. The chain is Exoribonuclease 2 from Haemophilus influenzae (strain 86-028NP).